A 347-amino-acid polypeptide reads, in one-letter code: Protein RecA (347 aa).

67-74 (GPESSGKT) provides a ligand contact to ATP. Residues 327–347 (ALGLSSPTPKENGKEKGKAKP) form a disordered region. Residues 337–347 (ENGKEKGKAKP) show a composition bias toward basic and acidic residues.

This sequence belongs to the RecA family.

The protein resides in the cytoplasm. In terms of biological role, can catalyze the hydrolysis of ATP in the presence of single-stranded DNA, the ATP-dependent uptake of single-stranded DNA by duplex DNA, and the ATP-dependent hybridization of homologous single-stranded DNAs. It interacts with LexA causing its activation and leading to its autocatalytic cleavage. The protein is Protein RecA of Desulforapulum autotrophicum (strain ATCC 43914 / DSM 3382 / VKM B-1955 / HRM2) (Desulfobacterium autotrophicum).